The sequence spans 41 residues: Large ribosomal subunit protein bL36 (41 aa).

Belongs to the bacterial ribosomal protein bL36 family.

The protein is Large ribosomal subunit protein bL36 of Paracoccus denitrificans (strain Pd 1222).